The chain runs to 345 residues: Succinylglutamate desuccinylase (345 aa).

Histidine 64, glutamate 67, and histidine 161 together coordinate Zn(2+). Glutamate 225 is an active-site residue.

The protein belongs to the AspA/AstE family. Succinylglutamate desuccinylase subfamily. Zn(2+) serves as cofactor.

It carries out the reaction N-succinyl-L-glutamate + H2O = L-glutamate + succinate. Its pathway is amino-acid degradation; L-arginine degradation via AST pathway; L-glutamate and succinate from L-arginine: step 5/5. In terms of biological role, transforms N(2)-succinylglutamate into succinate and glutamate. This Shewanella piezotolerans (strain WP3 / JCM 13877) protein is Succinylglutamate desuccinylase.